A 384-amino-acid chain; its full sequence is DNA replication and repair protein RecF (384 aa).

30–37 serves as a coordination point for ATP; the sequence is GENAQGKT.

Belongs to the RecF family.

The protein resides in the cytoplasm. In terms of biological role, the RecF protein is involved in DNA metabolism; it is required for DNA replication and normal SOS inducibility. RecF binds preferentially to single-stranded, linear DNA. It also seems to bind ATP. This is DNA replication and repair protein RecF from Levilactobacillus brevis (strain ATCC 367 / BCRC 12310 / CIP 105137 / JCM 1170 / LMG 11437 / NCIMB 947 / NCTC 947) (Lactobacillus brevis).